A 490-amino-acid polypeptide reads, in one-letter code: Serine palmitoyltransferase 2 (490 aa).

The chain crosses the membrane as a helical span at residues 10–30; sequence VDDVGYLPILFLYIAYAFIIF. Lys321 is subject to N6-(pyridoxal phosphate)lysine.

Belongs to the class-II pyridoxal-phosphate-dependent aminotransferase family. In terms of assembly, forms a heterodimer with sptA. Pyridoxal 5'-phosphate is required as a cofactor.

Its subcellular location is the endoplasmic reticulum membrane. The catalysed reaction is L-serine + hexadecanoyl-CoA + H(+) = 3-oxosphinganine + CO2 + CoA. The protein operates within lipid metabolism; sphingolipid metabolism. Functionally, catalytic subunit of serine palmitoyltransferase (SPT), which catalyzes the committed step in the synthesis of sphingolipids, the condensation of serine with palmitoyl CoA to form the long chain base 3-ketosphinganine. The protein is Serine palmitoyltransferase 2 (sptB) of Dictyostelium discoideum (Social amoeba).